The chain runs to 397 residues: 1-deoxy-D-xylulose 5-phosphate reductoisomerase (397 aa).

Threonine 10, glycine 11, serine 12, isoleucine 13, glycine 36, lysine 37, asparagine 38, and asparagine 124 together coordinate NADPH. Residue lysine 125 coordinates 1-deoxy-D-xylulose 5-phosphate. Residue glutamate 126 coordinates NADPH. Mn(2+) is bound at residue aspartate 150. Serine 151, glutamate 152, serine 186, and histidine 209 together coordinate 1-deoxy-D-xylulose 5-phosphate. Glutamate 152 lines the Mn(2+) pocket. Residue glycine 215 participates in NADPH binding. The 1-deoxy-D-xylulose 5-phosphate site is built by serine 222, asparagine 227, lysine 228, and glutamate 231. Glutamate 231 is a binding site for Mn(2+).

Belongs to the DXR family. As to quaternary structure, homodimer. Mg(2+) serves as cofactor. The cofactor is Mn(2+).

It catalyses the reaction 2-C-methyl-D-erythritol 4-phosphate + NADP(+) = 1-deoxy-D-xylulose 5-phosphate + NADPH + H(+). The protein operates within isoprenoid biosynthesis; isopentenyl diphosphate biosynthesis via DXP pathway; isopentenyl diphosphate from 1-deoxy-D-xylulose 5-phosphate: step 1/6. Functionally, catalyzes the NADPH-dependent rearrangement and reduction of 1-deoxy-D-xylulose-5-phosphate (DXP) to 2-C-methyl-D-erythritol 4-phosphate (MEP). The sequence is that of 1-deoxy-D-xylulose 5-phosphate reductoisomerase from Proteus mirabilis (strain HI4320).